We begin with the raw amino-acid sequence, 326 residues long: Vitamin B12 import system permease protein BtuC (326 aa).

Transmembrane regions (helical) follow at residues 13–35 (IRWLLCLSVLMLLALLLSLCAGE), 55–77 (IRLPRTLAVLLVGAALAISGAVM), 90–107 (LLGVSNGAGVGLIAAVLL), 111–133 (QLPNWALGLCAIAGALIITLILL), 146–168 (LLAGVALGIICSALMTWAIYFST), 188–205 (WRQSWLMLALIPVLLWIC), 242–264 (MVGVSVALAGAIGFIGLVIPHIL), 274–296 (VLLPGCALAGASALLLADIVARL), and 303–322 (LPIGVVTATLGAPVFIWLLL).

This sequence belongs to the binding-protein-dependent transport system permease family. FecCD subfamily. The complex is composed of two ATP-binding proteins (BtuD), two transmembrane proteins (BtuC) and a solute-binding protein (BtuF).

The protein resides in the cell inner membrane. In terms of biological role, part of the ABC transporter complex BtuCDF involved in vitamin B12 import. Involved in the translocation of the substrate across the membrane. The sequence is that of Vitamin B12 import system permease protein BtuC from Shigella flexneri.